Consider the following 636-residue polypeptide: Carbon monoxide dehydrogenase 1 (636 aa).

Residues cysteine 38, cysteine 46, cysteine 47, cysteine 50, cysteine 55, and cysteine 69 each contribute to the [4Fe-4S] cluster site. [Ni-4Fe-5S] cluster-binding residues include histidine 262, cysteine 297, cysteine 335, cysteine 448, cysteine 478, and cysteine 528.

The protein belongs to the Ni-containing carbon monoxide dehydrogenase family. In terms of assembly, homodimer. Requires [4Fe-4S] cluster as cofactor. [Ni-4Fe-5S] cluster is required as a cofactor.

Its subcellular location is the cytoplasm. The protein localises to the cell membrane. It catalyses the reaction CO + 2 oxidized [2Fe-2S]-[ferredoxin] + H2O = 2 reduced [2Fe-2S]-[ferredoxin] + CO2 + 2 H(+). Inactivated by O(2). Its function is as follows. CODH oxidizes carbon monoxide coupled, via CooF, to the reduction of a hydrogen cation by a hydrogenase (possibly CooH). The polypeptide is Carbon monoxide dehydrogenase 1 (cooS1) (Carboxydothermus hydrogenoformans (strain ATCC BAA-161 / DSM 6008 / Z-2901)).